The chain runs to 297 residues: D-aminoacyl-tRNA deacylase (297 aa).

The protein belongs to the DtdA deacylase family. In terms of assembly, monomer. Requires Zn(2+) as cofactor.

It catalyses the reaction a D-aminoacyl-tRNA + H2O = a tRNA + a D-alpha-amino acid + H(+). The catalysed reaction is glycyl-tRNA(Ala) + H2O = tRNA(Ala) + glycine + H(+). Functionally, D-aminoacyl-tRNA deacylase with broad substrate specificity. By recycling D-aminoacyl-tRNA to D-amino acids and free tRNA molecules, this enzyme counteracts the toxicity associated with the formation of D-aminoacyl-tRNA entities in vivo. In Methanosarcina mazei (strain ATCC BAA-159 / DSM 3647 / Goe1 / Go1 / JCM 11833 / OCM 88) (Methanosarcina frisia), this protein is D-aminoacyl-tRNA deacylase.